Here is a 273-residue protein sequence, read N- to C-terminus: NAD kinase (273 aa).

Asp53 (proton acceptor) is an active-site residue. Residues 53 to 54 (DG), Arg58, 128 to 129 (NE), Asp157, 168 to 173 (TAYNFS), and Ala192 contribute to the NAD(+) site.

This sequence belongs to the NAD kinase family. A divalent metal cation serves as cofactor.

It is found in the cytoplasm. The enzyme catalyses NAD(+) + ATP = ADP + NADP(+) + H(+). Functionally, involved in the regulation of the intracellular balance of NAD and NADP, and is a key enzyme in the biosynthesis of NADP. Catalyzes specifically the phosphorylation on 2'-hydroxyl of the adenosine moiety of NAD to yield NADP. The protein is NAD kinase of Finegoldia magna (strain ATCC 29328 / DSM 20472 / WAL 2508) (Peptostreptococcus magnus).